The following is a 386-amino-acid chain: GTPase Obg (386 aa).

The region spanning M1–L159 is the Obg domain. In terms of domain architecture, OBG-type G spans A160–D333. GTP contacts are provided by residues G166 to S173, F191 to V195, D213 to G216, N283 to D286, and S314 to Y316. Mg(2+) is bound by residues S173 and T193. The interval K356–D375 is disordered. Positions S360 to D375 are enriched in acidic residues.

It belongs to the TRAFAC class OBG-HflX-like GTPase superfamily. OBG GTPase family. Monomer. It depends on Mg(2+) as a cofactor.

It is found in the cytoplasm. Its function is as follows. An essential GTPase which binds GTP, GDP and possibly (p)ppGpp with moderate affinity, with high nucleotide exchange rates and a fairly low GTP hydrolysis rate. Plays a role in control of the cell cycle, stress response, ribosome biogenesis and in those bacteria that undergo differentiation, in morphogenesis control. This chain is GTPase Obg, found in Shewanella sediminis (strain HAW-EB3).